Reading from the N-terminus, the 180-residue chain is Ribonuclease M5 (180 aa).

The Toprim domain occupies lysine 5–serine 90. Residues glutamate 11, aspartate 59, and aspartate 61 each contribute to the Mg(2+) site.

The protein belongs to the ribonuclease M5 family. Mg(2+) serves as cofactor.

The protein localises to the cytoplasm. The catalysed reaction is Endonucleolytic cleavage of RNA, removing 21 and 42 nucleotides, respectively, from the 5'- and 3'-termini of a 5S-rRNA precursor.. Its function is as follows. Required for correct processing of both the 5' and 3' ends of 5S rRNA precursor. Cleaves both sides of a double-stranded region yielding mature 5S rRNA in one step. The sequence is that of Ribonuclease M5 from Mycoplasma capricolum subsp. capricolum (strain California kid / ATCC 27343 / NCTC 10154).